The chain runs to 160 residues: Transcription elongation factor GreA (160 aa).

Positions 11–38 (YDRLMKELERLKSERPAIIQAIKEAREE) form a coiled coil.

The protein belongs to the GreA/GreB family.

Functionally, necessary for efficient RNA polymerase transcription elongation past template-encoded arresting sites. The arresting sites in DNA have the property of trapping a certain fraction of elongating RNA polymerases that pass through, resulting in locked ternary complexes. Cleavage of the nascent transcript by cleavage factors such as GreA or GreB allows the resumption of elongation from the new 3'terminus. GreA releases sequences of 2 to 3 nucleotides. This chain is Transcription elongation factor GreA, found in Nitratidesulfovibrio vulgaris (strain DSM 19637 / Miyazaki F) (Desulfovibrio vulgaris).